The chain runs to 241 residues: Core protein D3 homolog (241 aa).

Belongs to the chordopoxvirinae D3 family.

It localises to the virion. Functionally, late protein which is part of a large complex required for early virion morphogenesis. This complex participates in the formation of virosomes and the incorporation of virosomal contents into nascent immature virions. The sequence is that of Core protein D3 homolog from Oryctolagus cuniculus (Rabbit).